Reading from the N-terminus, the 21-residue chain is Protopolybiakinin-1 (21 aa).

The span at 1–11 (DKNKKPIRVGG) shows a compositional bias: basic residues. A disordered region spans residues 1 to 21 (DKNKKPIRVGGRRPPGFTPFR).

It belongs to the bradykinin-related peptide family. As to expression, expressed by the venom gland.

It localises to the secreted. Its function is as follows. Causes constriction of the isolated rat ileum muscles (is 13-fold less potent than bradykinin (BK)), as well as degranulation of mast cells (is 7-fold more potent than BK). In vivo, causes algesic effects. Muscle constriction and algesic effects are partially mediated by bradykinin receptors B2 (BDKRB2). This is Protopolybiakinin-1 from Protopolybia exigua (Neotropical social wasp).